The chain runs to 148 residues: Large ribosomal subunit protein uL15 (148 aa).

Residues 1–30 (MTHSKRNTRKLRGHVSHGHGRVGKHRKHPG) show a composition bias toward basic residues. The segment at 1 to 38 (MTHSKRNTRKLRGHVSHGHGRVGKHRKHPGGRGMAGPE) is disordered.

Belongs to the universal ribosomal protein uL15 family.

The chain is Large ribosomal subunit protein uL15 (RPL27A) from Euplotes crassus.